Here is a 25-residue protein sequence, read N- to C-terminus: Antimicrobial peptide 2 (25 aa).

Expressed by the skin glands.

It localises to the secreted. Its function is as follows. Has very strong antibacterial activity against Gram-positive bacterium S.aureus and very weak activity against Gram-negative bacterium E.coli. The polypeptide is Antimicrobial peptide 2 (Xenopus tropicalis (Western clawed frog)).